The chain runs to 541 residues: Glucose-6-phosphate isomerase (541 aa).

The Proton donor role is filled by glutamate 346. Residues histidine 377 and lysine 506 contribute to the active site.

This sequence belongs to the GPI family.

It localises to the cytoplasm. It carries out the reaction alpha-D-glucose 6-phosphate = beta-D-fructose 6-phosphate. The protein operates within carbohydrate biosynthesis; gluconeogenesis. Its pathway is carbohydrate degradation; glycolysis; D-glyceraldehyde 3-phosphate and glycerone phosphate from D-glucose: step 2/4. Functionally, catalyzes the reversible isomerization of glucose-6-phosphate to fructose-6-phosphate. In Rhizobium johnstonii (strain DSM 114642 / LMG 32736 / 3841) (Rhizobium leguminosarum bv. viciae), this protein is Glucose-6-phosphate isomerase.